The following is a 680-amino-acid chain: DNA ligase (680 aa).

NAD(+) is bound by residues 32–36 (DAVYD), 81–82 (SL), and E115. K117 serves as the catalytic N6-AMP-lysine intermediate. The NAD(+) site is built by R138, E175, K291, and K315. Residues C409, C412, C427, and C432 each contribute to the Zn(2+) site. The BRCT domain maps to 600 to 680 (ASEQHLKGLT…RLQAMLKDSP (81 aa)).

The protein belongs to the NAD-dependent DNA ligase family. LigA subfamily. Mg(2+) serves as cofactor. It depends on Mn(2+) as a cofactor.

The enzyme catalyses NAD(+) + (deoxyribonucleotide)n-3'-hydroxyl + 5'-phospho-(deoxyribonucleotide)m = (deoxyribonucleotide)n+m + AMP + beta-nicotinamide D-nucleotide.. In terms of biological role, DNA ligase that catalyzes the formation of phosphodiester linkages between 5'-phosphoryl and 3'-hydroxyl groups in double-stranded DNA using NAD as a coenzyme and as the energy source for the reaction. It is essential for DNA replication and repair of damaged DNA. This chain is DNA ligase, found in Synechococcus sp. (strain CC9902).